We begin with the raw amino-acid sequence, 170 residues long: Putative pre-16S rRNA nuclease (170 aa).

It belongs to the YqgF nuclease family.

The protein localises to the cytoplasm. Could be a nuclease involved in processing of the 5'-end of pre-16S rRNA. The chain is Putative pre-16S rRNA nuclease from Synechococcus sp. (strain JA-2-3B'a(2-13)) (Cyanobacteria bacterium Yellowstone B-Prime).